Consider the following 751-residue polypeptide: MSNQGSRRNGPVKLRLTVLCAKNLVKKDFFRLPDSFAKVVVDGSGQCHSTDTVKNTLDPKWNQHYDLYIGKSDSITISVWNHKKIHKKQGAGFLGCVRLLSNAINRLKDTGYQRLDLCKLGPNDNDTVRGQIVVSLQSRDRIGSGGQVVDCSRLFDNDLPDGWEERRTASGRIQYLNHITRTTQWERPTRPASEYSSPGRPLSCFVDENTPITGTNGASCGQTSDPRISERRVRSQRHRNYMSRTHLHTPPDLPEGYEQRTTQQGQVYFLHTQTGVSTWHDPRVPRDLGNVNCEELGPLPPGWEIRNTATGRVYFVDHNNRTTQFTDPRLSANLHLVLNRQNQQLKEQQPPQVVSLCQLPDEVECLTVPRYKRDLVHKLKSLRQELSQQQPQAGHCRIEVSREEIFEESYRQVMKMRPKDLWKRLMIKFRGEEGLDYGGVAREWLYLLSHDMLNPYYGLFQYSRDDIYTLQINPDSAVNPEHLSYFHFVGRIMGMAVFHGHYIDGGFTLPFYKQLLGKPITLDDMESVDPDLHNSLVWILENDITGVLDHTFCVEHNAYGELIQHELKPSGKSIPVTEDTKKEYVRLYVNWRFLRGIEAQFLALQKGFNEVIPQHLLKAFDEKELELIICGLGKIDVSDWKSNTRLKHCTTDSNIVKWFWKAVESFDEERRARLLQFVTGSSRVPLQGFKALQGAAGPRLFTIHQIDASTNNLPKAHTCFNRIDIPPYETYEKLYEKLLTAIEETCGFAVE.

A C2 domain is found at 1-119 (MSNQGSRRNG…TGYQRLDLCK (119 aa)). Positions 157–190 (NDLPDGWEERRTASGRIQYLNHITRTTQWERPTR) constitute a WW 1 domain. Over residues 214-226 (GTNGASCGQTSDP) the composition is skewed to polar residues. The disordered stretch occupies residues 214–236 (GTNGASCGQTSDPRISERRVRSQ). WW domains lie at 251–284 (PDLP…DPRV) and 297–330 (GPLP…DPRL). An HECT domain is found at 417 to 751 (RPKDLWKRLM…IEETCGFAVE (335 aa)). The active-site Glycyl thioester intermediate is Cys719.

It localises to the nucleus. The protein localises to the cytoplasm. It is found in the cell membrane. The protein resides in the membrane raft. The catalysed reaction is S-ubiquitinyl-[E2 ubiquitin-conjugating enzyme]-L-cysteine + [acceptor protein]-L-lysine = [E2 ubiquitin-conjugating enzyme]-L-cysteine + N(6)-ubiquitinyl-[acceptor protein]-L-lysine.. The protein operates within protein modification; protein ubiquitination. Its function is as follows. E3 ubiquitin-protein ligase which accepts ubiquitin from an E2 ubiquitin-conjugating enzyme in the form of a thioester and then directly transfers the ubiquitin to targeted substrates. The polypeptide is E3 ubiquitin-protein ligase SMURF2 (smurf2) (Xenopus laevis (African clawed frog)).